The following is a 369-amino-acid chain: MKLYSVSIIIFVLIALSTIVNAQQAATDSCNSTLPLNDLTFNTSLLQCTEAWTPQNFILRYARTAENTWSFILSAPDSSAFIGIGFSTNGQMIGSSAIVGWIPSDGGSGTVKPYLLGGKSPGEVNPDQGDLTIVNGSLKIESVSSRLYMRFQLTATLPRQSLLYAVGPAGFFPSSPDFRLREHRFVTTTTINYNTGSQSVVKVSPHSKLKKTHGLMNMFGWGILIIVGAIVARHMKQWDPTWFYAHIALQTTGFLLGLTGVICGLVLENRLKANNVSKHKGLGITILVMGVLQMLALLARPDKQSKYRKYWNWYHHNIGRLLIILAISNIFYGIHLAKAGTSWNGGYGFAVAVLALTAIGLEVRKFLKK.

A signal peptide spans 1 to 22 (MKLYSVSIIIFVLIALSTIVNA). Residues 55–167 (QNFILRYART…PRQSLLYAVG (113 aa)) form the DOMON domain. Positions 174-369 (SSPDFRLREH…GLEVRKFLKK (196 aa)) constitute a Cytochrome b561 domain. The chain crosses the membrane as a helical span at residues 212–232 (THGLMNMFGWGILIIVGAIVA). His-213 and His-246 together coordinate heme b. Helical transmembrane passes span 247–267 (IALQ…GLVL) and 279–299 (HKGL…ALLA). Residues His-279 and His-315 each coordinate heme b. 2 helical membrane-spanning segments follow: residues 321-341 (LLII…KAGT) and 343-363 (WNGG…GLEV).

It depends on heme b as a cofactor.

It localises to the membrane. In terms of biological role, may act as a catecholamine-responsive trans-membrane electron transporter. The protein is Cytochrome b561 and DOMON domain-containing protein At3g07570 of Arabidopsis thaliana (Mouse-ear cress).